Consider the following 563-residue polypeptide: 5-aminolevulinate synthase, mitochondrial (563 aa).

Residues 1-18 (MESLVRQSKKLCPYIGRT) constitute a mitochondrion transit peptide. Substrate-binding residues include Arg137, Ser251, and Lys270. Pyridoxal 5'-phosphate contacts are provided by Ser303, His331, and Thr373. Lys376 is an active-site residue. Lys376 bears the N6-(pyridoxal phosphate)lysine mark. Pyridoxal 5'-phosphate-binding residues include Thr405 and Thr406. Thr491 serves as a coordination point for substrate.

It belongs to the class-II pyridoxal-phosphate-dependent aminotransferase family. In terms of assembly, homodimer. It depends on pyridoxal 5'-phosphate as a cofactor.

The protein resides in the mitochondrion matrix. The catalysed reaction is succinyl-CoA + glycine + H(+) = 5-aminolevulinate + CO2 + CoA. It functions in the pathway porphyrin-containing compound metabolism; protoporphyrin-IX biosynthesis; 5-aminolevulinate from glycine: step 1/1. In terms of biological role, catalyzes the synthesis of 5-aminolevulinate (ALA) from succinyl-CoA and glycine, the first and rate-limiting step in heme biosynthesis. The sequence is that of 5-aminolevulinate synthase, mitochondrial (HEM1) from Yarrowia lipolytica (strain CLIB 122 / E 150) (Yeast).